The following is a 289-amino-acid chain: Probable prolyl 4-hydroxylase 10 (289 aa).

Residues 20–40 traverse the membrane as a helical; Signal-anchor for type II membrane protein segment; it reads LVFAVLIMSTFVILILLAFGI. Residues 41–289 are Lumenal-facing; the sequence is LSVPSNNAGS…KWLRVHEYKV (249 aa). The Fe2OG dioxygenase domain occupies 161-284; that stretch reads HGEGLQVLHY…KWSSTKWLRV (124 aa). Residues histidine 179 and aspartate 181 each contribute to the Fe cation site. Asparagine 220 carries N-linked (GlcNAc...) asparagine glycosylation. Fe cation is bound at residue histidine 265. Lysine 275 contacts 2-oxoglutarate.

This sequence belongs to the P4HA family. Requires Fe(2+) as cofactor. L-ascorbate is required as a cofactor.

The protein resides in the endoplasmic reticulum membrane. The enzyme catalyses L-prolyl-[collagen] + 2-oxoglutarate + O2 = trans-4-hydroxy-L-prolyl-[collagen] + succinate + CO2. In terms of biological role, catalyzes the post-translational formation of 4-hydroxyproline in -Xaa-Pro-Gly- sequences in proline-rich peptide sequences of plant glycoproteins and other proteins. Hydroxyprolines are important constituent of many plant cell wall glycoproteins such as extensins, hydroxyproline-rich glycoproteins, lectins and arabinogalactan proteins. In Arabidopsis thaliana (Mouse-ear cress), this protein is Probable prolyl 4-hydroxylase 10.